Here is a 161-residue protein sequence, read N- to C-terminus: Allophycocyanin beta chain (161 aa).

Asn71 is modified (N4-methylasparagine). Cys81 serves as a coordination point for (2R,3E)-phycocyanobilin.

This sequence belongs to the phycobiliprotein family. In terms of assembly, heterodimer of an alpha and a beta chain. Post-translationally, contains one covalently linked phycocyanobilin chromophore.

It is found in the cellular thylakoid membrane. Its function is as follows. Light-harvesting photosynthetic bile pigment-protein from the phycobiliprotein complex. Allophycocyanin has a maximum absorption at approximately 650 nanometers. The protein is Allophycocyanin beta chain (apcB) of Anabaena variabilis.